A 195-amino-acid polypeptide reads, in one-letter code: 2-amino-4-hydroxy-6-hydroxymethyldihydropteridine pyrophosphokinase (195 aa).

The protein belongs to the HPPK family.

It catalyses the reaction 6-hydroxymethyl-7,8-dihydropterin + ATP = (7,8-dihydropterin-6-yl)methyl diphosphate + AMP + H(+). It functions in the pathway cofactor biosynthesis; tetrahydrofolate biosynthesis; 2-amino-4-hydroxy-6-hydroxymethyl-7,8-dihydropteridine diphosphate from 7,8-dihydroneopterin triphosphate: step 4/4. Functionally, catalyzes the transfer of pyrophosphate from adenosine triphosphate (ATP) to 6-hydroxymethyl-7,8-dihydropterin, an enzymatic step in folate biosynthesis pathway. This chain is 2-amino-4-hydroxy-6-hydroxymethyldihydropteridine pyrophosphokinase (folK), found in Synechocystis sp. (strain ATCC 27184 / PCC 6803 / Kazusa).